The sequence spans 204 residues: ADP-ribosylation factor-like protein 15 (204 aa).

GTP-binding positions include 39 to 46 (GLTGSGKT), 82 to 86 (ELGGA), and 142 to 145 (NHQD).

It belongs to the small GTPase superfamily. Arf family.

The polypeptide is ADP-ribosylation factor-like protein 15 (Arl15) (Mus musculus (Mouse)).